The primary structure comprises 146 residues: MKLHELKPSEGSRKERNRVGRGIGSGNGKTSGKGHKGQNARSGGGVRPGFEGGQMPLFQRLPKRGFTNINRKDYAVINLDRLNSFDEGTEVTPELLLETGAISKLKAGVKILGNGKLEKKLTVKANKFSASAKEAIEAAGGTAEVI.

Positions 1-18 (MKLHELKPSEGSRKERNR) are enriched in basic and acidic residues. The tract at residues 1-57 (MKLHELKPSEGSRKERNRVGRGIGSGNGKTSGKGHKGQNARSGGGVRPGFEGGQMPL) is disordered. Composition is skewed to gly residues over residues 21-31 (RGIGSGNGKTS) and 42-52 (SGGGVRPGFEG).

This sequence belongs to the universal ribosomal protein uL15 family. In terms of assembly, part of the 50S ribosomal subunit.

Binds to the 23S rRNA. This is Large ribosomal subunit protein uL15 from Bacillus pumilus (strain SAFR-032).